The following is a 331-amino-acid chain: Major outer membrane protein P.IB (331 aa).

Residues 1–19 form the signal peptide; the sequence is MKKSLIALTLAALPVAAMA.

This sequence belongs to the Gram-negative porin family. Homotrimer.

The protein localises to the cell outer membrane. Functionally, serves as a slightly cation selective porin. In Neisseria meningitidis serogroup B, this protein is Major outer membrane protein P.IB (porB).